The primary structure comprises 512 residues: 2-isopropylmalate synthase (512 aa).

The Pyruvate carboxyltransferase domain maps to L5–L268. Mn(2+) contacts are provided by D14, H202, H204, and N239. Positions G394 to G512 are regulatory domain.

It belongs to the alpha-IPM synthase/homocitrate synthase family. LeuA type 1 subfamily. In terms of assembly, homodimer. Requires Mn(2+) as cofactor.

The protein localises to the cytoplasm. The enzyme catalyses 3-methyl-2-oxobutanoate + acetyl-CoA + H2O = (2S)-2-isopropylmalate + CoA + H(+). It participates in amino-acid biosynthesis; L-leucine biosynthesis; L-leucine from 3-methyl-2-oxobutanoate: step 1/4. Catalyzes the condensation of the acetyl group of acetyl-CoA with 3-methyl-2-oxobutanoate (2-ketoisovalerate) to form 3-carboxy-3-hydroxy-4-methylpentanoate (2-isopropylmalate). In Verminephrobacter eiseniae (strain EF01-2), this protein is 2-isopropylmalate synthase.